The chain runs to 418 residues: Nuclear hormone receptor 114 (418 aa).

Positions 12 to 87 (DHVCLVCQDF…VGMDRNALQQ (76 aa)) form a DNA-binding region, nuclear receptor. NR C4-type zinc fingers lie at residues 15–35 (CLVC…CVGC) and 51–70 (CQFE…CRYC). Residues 89-130 (RDPIGYTKRTRRPKKELKTTSDCSSDEGASTPPSVSPLQLSP) are disordered. An NR LBD domain is found at 170–409 (PIRSLHEALC…AFARQLFFGD (240 aa)). The interval 398 to 409 (FSAFARQLFFGD) is AF-2.

The protein belongs to the nuclear hormone receptor family. Expressed in germ and intestinal cells and at low levels in the hypodermis.

The protein resides in the nucleus. In terms of biological role, probable transcription factor which may have a role in detoxifying dietary metabolites arising from bacterial tryptophan metabolism. Required for fertility and involved in proper postembryonic germline development, especially germline stem cell (GSC) proliferation. Required for activation of the methionine/S-adenosylmethionine (Met/SAM) cycle in response to low levels of SAM. This is Nuclear hormone receptor 114 from Caenorhabditis elegans.